We begin with the raw amino-acid sequence, 1102 residues long: Probable ubiquitin-conjugating enzyme E2 23 (1102 aa).

6 disordered regions span residues 1–20 (MEHE…DSSV), 25–111 (ASLS…DGNY), 396–418 (LPKV…PVHE), 579–602 (SPGN…SHQE), 661–710 (DESV…DIYA), and 760–800 (QAES…KNIL). Residues 31-44 (DSEHPNIYRQDIVK) show a composition bias toward basic and acidic residues. A compositionally biased stretch (acidic residues) spans 59–88 (GDSDSDSDISDEEEDDDDDEDNDDDDEDVE). The span at 579–596 (SPGNSFEEATQQDNGYQD) shows a compositional bias: polar residues. Positions 779-800 (SKVNVTDNCESKGTQANAKNIL) are enriched in polar residues. The UBC core domain maps to 850-1010 (QWFKKVDQDW…TFLLNCKTMM (161 aa)). The active-site Glycyl thioester intermediate is the C936.

This sequence belongs to the ubiquitin-conjugating enzyme family.

The catalysed reaction is S-ubiquitinyl-[E1 ubiquitin-activating enzyme]-L-cysteine + [E2 ubiquitin-conjugating enzyme]-L-cysteine = [E1 ubiquitin-activating enzyme]-L-cysteine + S-ubiquitinyl-[E2 ubiquitin-conjugating enzyme]-L-cysteine.. Its pathway is protein modification; protein ubiquitination. Functionally, accepts the ubiquitin from the E1 complex and catalyzes its covalent attachment to other proteins. In Arabidopsis thaliana (Mouse-ear cress), this protein is Probable ubiquitin-conjugating enzyme E2 23 (UBC23).